Reading from the N-terminus, the 411-residue chain is MIPFTAQYLLVCGYVILLGVILLERSGYSAFGLLEKRQDYFHNSHAIMLSSRQDLGVSGPALYELFEKHLLDAYRIPGRYPGGISTLYDTFSEYVFKGTSHENCSVETSAVAKLTRDVTPLPIHSHNDYWRDVPLLKGLAYGSVSTEADVWVHPHKDHPYNSSTDKLEDYVLAVGHDEDYIDPLRKTLEKLYTDPLQSLLEGVNCGKSNNSKTQKNGVFYTANHIPLFFYIDFKSDDNILTYKLLLEKYFTQLIQAGYLTYYDMDTGKIIQGQVTVIMTGNYPNNTDVLDNGKADGYFGDRKRYLLQDANLLELNEESAKMAVTASTSLSEILKMVGSSNLKVIMRGHLDKEEITAIKKYIDNAHSFDLKTRIWGVPSWPRKTMKRLWKQQIEDLNSDFLNVDDLKAAAMF.

The N-terminal stretch at 1–29 (MIPFTAQYLLVCGYVILLGVILLERSGYS) is a signal peptide.

The protein belongs to the AIM6 family.

This is Altered inheritance of mitochondria protein 6 (AIM6) from Candida glabrata (strain ATCC 2001 / BCRC 20586 / JCM 3761 / NBRC 0622 / NRRL Y-65 / CBS 138) (Yeast).